A 173-amino-acid chain; its full sequence is Ribosome maturation factor RimM (173 aa).

The 74-residue stretch at 96–169 folds into the PRC barrel domain; that stretch reads PDEFYDHQLE…LITIDPPDGL (74 aa).

The protein belongs to the RimM family. As to quaternary structure, binds ribosomal protein uS19.

The protein localises to the cytoplasm. In terms of biological role, an accessory protein needed during the final step in the assembly of 30S ribosomal subunit, possibly for assembly of the head region. Essential for efficient processing of 16S rRNA. May be needed both before and after RbfA during the maturation of 16S rRNA. It has affinity for free ribosomal 30S subunits but not for 70S ribosomes. This is Ribosome maturation factor RimM from Mycolicibacterium gilvum (strain PYR-GCK) (Mycobacterium gilvum (strain PYR-GCK)).